A 142-amino-acid polypeptide reads, in one-letter code: Large ribosomal subunit protein uL11 (142 aa).

This sequence belongs to the universal ribosomal protein uL11 family. Part of the ribosomal stalk of the 50S ribosomal subunit. Interacts with L10 and the large rRNA to form the base of the stalk. L10 forms an elongated spine to which L12 dimers bind in a sequential fashion forming a multimeric L10(L12)X complex. One or more lysine residues are methylated.

Its function is as follows. Forms part of the ribosomal stalk which helps the ribosome interact with GTP-bound translation factors. The polypeptide is Large ribosomal subunit protein uL11 (Pectobacterium carotovorum subsp. carotovorum (strain PC1)).